A 151-amino-acid polypeptide reads, in one-letter code: Ribosomal RNA large subunit methyltransferase H (151 aa).

S-adenosyl-L-methionine is bound by residues G100 and 119-124 (LSKMTF).

Belongs to the RNA methyltransferase RlmH family. In terms of assembly, homodimer.

The protein localises to the cytoplasm. The enzyme catalyses pseudouridine(1915) in 23S rRNA + S-adenosyl-L-methionine = N(3)-methylpseudouridine(1915) in 23S rRNA + S-adenosyl-L-homocysteine + H(+). Functionally, specifically methylates the pseudouridine at position 1915 (m3Psi1915) in 23S rRNA. The polypeptide is Ribosomal RNA large subunit methyltransferase H (Thermotoga sp. (strain RQ2)).